The chain runs to 148 residues: uncharacterized protein (148 aa).

Positions 1–17 (MCPPVRQRPAQAPPAKR) are enriched in low complexity. Disordered regions lie at residues 1–86 (MCPP…VQSP) and 122–148 (RAHR…TSPC). Residues 38–57 (RPPKMQRRPRPPVAKRRRFP) are compositionally biased toward basic residues. Over residues 137–148 (QRPSPDSQTSPC) the composition is skewed to polar residues.

This sequence belongs to the Epstein-Barr virus BLLF2 family.

This is an uncharacterized protein from Epstein-Barr virus (strain AG876) (HHV-4).